The chain runs to 198 residues: Probable GTP-binding protein EngB (198 aa).

An EngB-type G domain is found at 22–195 (NRNEVAFVGR…IDKLFLEFAT (174 aa)). GTP contacts are provided by residues 30–37 (GRSNVGKS), 57–61 (GKTRL), 75–78 (DLPG), 142–145 (TKSD), and 174–176 (YSS). Residues serine 37 and threonine 59 each coordinate Mg(2+).

The protein belongs to the TRAFAC class TrmE-Era-EngA-EngB-Septin-like GTPase superfamily. EngB GTPase family. Mg(2+) serves as cofactor.

In terms of biological role, necessary for normal cell division and for the maintenance of normal septation. The chain is Probable GTP-binding protein EngB from Clostridium botulinum (strain Alaska E43 / Type E3).